The following is a 238-amino-acid chain: Uridylate kinase (238 aa).

12–15 lines the ATP pocket; that stretch reads KLSG. Residue Gly-54 participates in UMP binding. The ATP site is built by Gly-55 and Arg-59. Residues Asp-74 and 135–142 each bind UMP; that span reads TGNPFFTT. Positions 162, 168, and 171 each coordinate ATP.

The protein belongs to the UMP kinase family. In terms of assembly, homohexamer.

The protein resides in the cytoplasm. It catalyses the reaction UMP + ATP = UDP + ADP. It functions in the pathway pyrimidine metabolism; CTP biosynthesis via de novo pathway; UDP from UMP (UMPK route): step 1/1. Its activity is regulated as follows. Inhibited by UTP. Its function is as follows. Catalyzes the reversible phosphorylation of UMP to UDP. The protein is Uridylate kinase of Bordetella avium (strain 197N).